The primary structure comprises 341 residues: S-adenosylmethionine:tRNA ribosyltransferase-isomerase (341 aa).

This sequence belongs to the QueA family. In terms of assembly, monomer.

It localises to the cytoplasm. The catalysed reaction is 7-aminomethyl-7-carbaguanosine(34) in tRNA + S-adenosyl-L-methionine = epoxyqueuosine(34) in tRNA + adenine + L-methionine + 2 H(+). It functions in the pathway tRNA modification; tRNA-queuosine biosynthesis. Its function is as follows. Transfers and isomerizes the ribose moiety from AdoMet to the 7-aminomethyl group of 7-deazaguanine (preQ1-tRNA) to give epoxyqueuosine (oQ-tRNA). This is S-adenosylmethionine:tRNA ribosyltransferase-isomerase from Clostridium botulinum (strain Alaska E43 / Type E3).